A 105-amino-acid chain; its full sequence is UPF0235 protein Mext_2130 (105 aa).

This sequence belongs to the UPF0235 family.

This Methylorubrum extorquens (strain PA1) (Methylobacterium extorquens) protein is UPF0235 protein Mext_2130.